A 261-amino-acid chain; its full sequence is Tyrosine phosphatase-like protein H5 (261 aa).

The Tyrosine-protein phosphatase domain occupies 26–261 (LIKKEHDKVL…ESVEQEYFVP (236 aa)).

The protein belongs to the protein-tyrosine phosphatase family.

This is Tyrosine phosphatase-like protein H5 (H6) from Microplitis demolitor bracovirus (isolate Webb) (MdBV).